We begin with the raw amino-acid sequence, 145 residues long: UPF0260 protein VC_1058 (145 aa).

It belongs to the UPF0260 family.

The sequence is that of UPF0260 protein VC_1058 from Vibrio cholerae serotype O1 (strain ATCC 39315 / El Tor Inaba N16961).